The chain runs to 138 residues: Probable scaffold protein gp13 (138 aa).

Its function is as follows. May act as an organizer for the correct association of several proteins in the surrounding of the head-tail connector protein gp8. The chain is Probable scaffold protein gp13 from Escherichia coli (Bacteriophage T7).